The chain runs to 91 residues: Apolipoprotein C-III (91 aa).

The N-terminal stretch at 1-20 (MQPRVLLAVTLLALLVSARA) is a signal peptide. Methionine 63 is subject to Methionine sulfoxide. Residues 68-91 (DSMKGYWTSLIGRLSGFLDSTPSS) form a lipid-binding region.

Belongs to the apolipoprotein C3 family.

It is found in the secreted. Functionally, component of triglyceride-rich very low density lipoproteins (VLDL) and high density lipoproteins (HDL) in plasma. Plays a multifaceted role in triglyceride homeostasis. Intracellularly, promotes hepatic very low density lipoprotein 1 (VLDL1) assembly and secretion; extracellularly, attenuates hydrolysis and clearance of triglyceride-rich lipoproteins (TRLs). Impairs the lipolysis of TRLs by inhibiting lipoprotein lipase and the hepatic uptake of TRLs by remnant receptors. Formed of several curved helices connected via semiflexible hinges, so that it can wrap tightly around the curved micelle surface and easily adapt to the different diameters of its natural binding partners. This chain is Apolipoprotein C-III (APOC3), found in Cavia porcellus (Guinea pig).